The following is a 428-amino-acid chain: Protein terminus (428 aa).

A C3H1-type zinc finger spans residues 325–346 (CRRCRTQFSRRSKLHIHQKLRC).

The chain is Protein terminus (term) from Drosophila melanogaster (Fruit fly).